The primary structure comprises 441 residues: 3-phosphoshikimate 1-carboxyvinyltransferase (441 aa).

Residues K25, S26, and R30 each contribute to the 3-phosphoshikimate site. K25 is a phosphoenolpyruvate binding site. G97 and R125 together coordinate phosphoenolpyruvate. 3-phosphoshikimate-binding residues include S169, Q170, D311, and K338. Residue Q170 coordinates phosphoenolpyruvate. The Proton acceptor role is filled by D311. R342, R383, and K410 together coordinate phosphoenolpyruvate.

The protein belongs to the EPSP synthase family. Monomer.

It localises to the cytoplasm. It carries out the reaction 3-phosphoshikimate + phosphoenolpyruvate = 5-O-(1-carboxyvinyl)-3-phosphoshikimate + phosphate. Its pathway is metabolic intermediate biosynthesis; chorismate biosynthesis; chorismate from D-erythrose 4-phosphate and phosphoenolpyruvate: step 6/7. Functionally, catalyzes the transfer of the enolpyruvyl moiety of phosphoenolpyruvate (PEP) to the 5-hydroxyl of shikimate-3-phosphate (S3P) to produce enolpyruvyl shikimate-3-phosphate and inorganic phosphate. The chain is 3-phosphoshikimate 1-carboxyvinyltransferase from Chlamydia muridarum (strain MoPn / Nigg).